The chain runs to 140 residues: Small ribosomal subunit protein eS17y (140 aa).

Belongs to the eukaryotic ribosomal protein eS17 family.

In Arabidopsis thaliana (Mouse-ear cress), this protein is Small ribosomal subunit protein eS17y (RPS17B).